The chain runs to 262 residues: Acyl-[acyl-carrier-protein]--UDP-N-acetylglucosamine O-acyltransferase (262 aa).

The protein belongs to the transferase hexapeptide repeat family. LpxA subfamily. Homotrimer.

The protein localises to the cytoplasm. The catalysed reaction is a (3R)-hydroxyacyl-[ACP] + UDP-N-acetyl-alpha-D-glucosamine = a UDP-3-O-[(3R)-3-hydroxyacyl]-N-acetyl-alpha-D-glucosamine + holo-[ACP]. The protein operates within glycolipid biosynthesis; lipid IV(A) biosynthesis; lipid IV(A) from (3R)-3-hydroxytetradecanoyl-[acyl-carrier-protein] and UDP-N-acetyl-alpha-D-glucosamine: step 1/6. In terms of biological role, involved in the biosynthesis of lipid A, a phosphorylated glycolipid that anchors the lipopolysaccharide to the outer membrane of the cell. The polypeptide is Acyl-[acyl-carrier-protein]--UDP-N-acetylglucosamine O-acyltransferase (Shigella boydii serotype 18 (strain CDC 3083-94 / BS512)).